The primary structure comprises 374 residues: uncharacterized protein (374 aa).

29-36 is an ATP binding site; it reads GSLNSGKS.

It belongs to the archaeal ATPase family.

This is an uncharacterized protein from Methanocaldococcus jannaschii (strain ATCC 43067 / DSM 2661 / JAL-1 / JCM 10045 / NBRC 100440) (Methanococcus jannaschii).